Consider the following 426-residue polypeptide: GTPase Obg (426 aa).

In terms of domain architecture, Obg spans 1-158 (MFVDQVSVYV…RNIKVELKLI (158 aa)). 2 disordered regions span residues 66–86 (GKRG…DPLV) and 119–146 (GGRG…GEPG). Positions 159–329 (ADVGLVGFPS…LLFAIADKLE (171 aa)) constitute an OBG-type G domain. Residues 165-172 (GFPSVGKS), 190-194 (FTTLS), 212-215 (DLPG), 282-285 (NKMD), and 310-312 (SAL) contribute to the GTP site. Mg(2+) contacts are provided by Ser172 and Thr192. Residues 348–426 (RYQKEEDPFH…LLEYEFEFIE (79 aa)) form the OCT domain.

It belongs to the TRAFAC class OBG-HflX-like GTPase superfamily. OBG GTPase family. Monomer. Mg(2+) is required as a cofactor.

It is found in the cytoplasm. In terms of biological role, an essential GTPase which binds GTP, GDP and possibly (p)ppGpp with moderate affinity, with high nucleotide exchange rates and a fairly low GTP hydrolysis rate. Plays a role in control of the cell cycle, stress response, ribosome biogenesis and in those bacteria that undergo differentiation, in morphogenesis control. The protein is GTPase Obg of Oceanobacillus iheyensis (strain DSM 14371 / CIP 107618 / JCM 11309 / KCTC 3954 / HTE831).